The following is a 317-amino-acid chain: MATDARGVVAITGATGFLGRHLVRALAQDGWRPRVLVRRDPVHPFWRDLEVEVVTGDLGTPRALDRLAKGAEVFIHVAGLIKARTLEGFNRVNQDGARAAAEAARAAGARFILVSSLAAREPSLSNYAASKRAGEDAVRAADPSALIVRPPAIYGPGDTETLGLFQLAARSPVLPVLSQTSRVAMIHVEDAAAKLVAFCRTPVLGLVELSDVRRDGYTWTEIMRGAAHVMGAKPRLIRLPDPGILTAGALVDAWSSLTNTPSVFGLGKARELLHTDWTPSSAPMAEGVPSKFGLIDGFTHTVDWYRAAGWLPKNIVA.

Residues 1 to 27 form the signal peptide; the sequence is MATDARGVVAITGATGFLGRHLVRALA.

Belongs to the NAD(P)-dependent epimerase/dehydratase family.

The protein localises to the periplasm. The catalysed reaction is N-acyl-3-oxosphinganine + NADH + H(+) = an N-acylsphinganine + NAD(+). Its pathway is lipid metabolism; sphingolipid metabolism. In terms of biological role, involved in de novo bacterial ceramide synthesis. Catalyzes the reduction of bacterial oxidized ceramides to bacterial dihydroceramides. The protein is Ceramide reductase of Caulobacter vibrioides (strain NA1000 / CB15N) (Caulobacter crescentus).